The following is a 578-amino-acid chain: Aspartate--tRNA ligase (578 aa).

Residue E169 coordinates L-aspartate. Residues 191–194 (QTFK) form an aspartate region. An L-aspartate-binding site is contributed by R213. ATP-binding positions include 213–215 (RDE) and Q222. H440 is a binding site for L-aspartate. ATP is bound at residue E474. R481 lines the L-aspartate pocket. 526–529 (GLDR) lines the ATP pocket.

It belongs to the class-II aminoacyl-tRNA synthetase family. Type 1 subfamily. Homodimer.

It is found in the cytoplasm. The catalysed reaction is tRNA(Asp) + L-aspartate + ATP = L-aspartyl-tRNA(Asp) + AMP + diphosphate. Functionally, catalyzes the attachment of L-aspartate to tRNA(Asp) in a two-step reaction: L-aspartate is first activated by ATP to form Asp-AMP and then transferred to the acceptor end of tRNA(Asp). This Ureaplasma parvum serovar 3 (strain ATCC 700970) protein is Aspartate--tRNA ligase.